Here is a 121-residue protein sequence, read N- to C-terminus: MSAVAENIQTGMPAPILFTDSAAAKVAQLIAEEGNPELKLRVFVQGGGCSGFQYGFTFDEITNEDDTTMTKNGVSLLIDAMSYQYLVGAEIDYKEDLQGAQFVIKNPNATTTCGCGSSFSA.

Iron-sulfur cluster-binding residues include cysteine 49, cysteine 113, and cysteine 115.

The protein belongs to the HesB/IscA family. Homodimer. It depends on iron-sulfur cluster as a cofactor.

In terms of biological role, required for insertion of 4Fe-4S clusters. The sequence is that of Putative iron-sulfur cluster insertion protein ErpA from Verminephrobacter eiseniae (strain EF01-2).